We begin with the raw amino-acid sequence, 272 residues long: 2-C-methyl-D-erythritol 4-phosphate cytidylyltransferase (272 aa).

This sequence belongs to the IspD/TarI cytidylyltransferase family. IspD subfamily.

The enzyme catalyses 2-C-methyl-D-erythritol 4-phosphate + CTP + H(+) = 4-CDP-2-C-methyl-D-erythritol + diphosphate. It participates in isoprenoid biosynthesis; isopentenyl diphosphate biosynthesis via DXP pathway; isopentenyl diphosphate from 1-deoxy-D-xylulose 5-phosphate: step 2/6. Catalyzes the formation of 4-diphosphocytidyl-2-C-methyl-D-erythritol from CTP and 2-C-methyl-D-erythritol 4-phosphate (MEP). The chain is 2-C-methyl-D-erythritol 4-phosphate cytidylyltransferase from Xanthomonas oryzae pv. oryzae (strain PXO99A).